A 105-amino-acid chain; its full sequence is Small ribosomal subunit protein uS10 (105 aa).

It belongs to the universal ribosomal protein uS10 family. In terms of assembly, part of the 30S ribosomal subunit.

In terms of biological role, involved in the binding of tRNA to the ribosomes. The polypeptide is Small ribosomal subunit protein uS10 (Arthrospira platensis (Spirulina platensis)).